The chain runs to 87 residues: Elastase inhibitor AFLEI (87 aa).

The N-terminal stretch at 1 to 19 (MKFSLACLLALAGLQAALA) is a signal peptide. Cys-24 and Cys-86 are disulfide-bonded.

Its subcellular location is the secreted. In terms of biological role, elastase inhibitor. This chain is Elastase inhibitor AFLEI, found in Aspergillus fumigatus (strain CBS 144.89 / FGSC A1163 / CEA10) (Neosartorya fumigata).